The primary structure comprises 350 residues: MKNIETILKLAEEKIVLVHNLKDLQEYKVEFLGRNGIVTSELKKLGSLINGQKRKEFGLKINTLKDKIHDIIKAKAQNLEAEELHLKLAADKIDLTIPARRYKQGSIHPITQCMDELIQVFSQFGFTIENGPNIENDFYNFTALNFEYDHPARQMHDTFYLKGHENDKPLLLRTHTSTVQIRAMKNGKPPFRFIAPGRTYRSDSDMTHTPMFHQIEGLVIDKNINMGHLKYVIITFIRSFFENSNIELRFRPSFFPFTEPSAEVDIRMNKNDKWLEVLGCGMVHPNVLKNIDINRSEYQGFAFGLGVERFAMLKYNIKDLRRFFEGDIRWLKHYNFESFDIPNLAGGLTK.

Glu259 is a binding site for Mg(2+).

Belongs to the class-II aminoacyl-tRNA synthetase family. Phe-tRNA synthetase alpha subunit type 1 subfamily. Tetramer of two alpha and two beta subunits. Mg(2+) serves as cofactor.

The protein localises to the cytoplasm. It catalyses the reaction tRNA(Phe) + L-phenylalanine + ATP = L-phenylalanyl-tRNA(Phe) + AMP + diphosphate + H(+). This chain is Phenylalanine--tRNA ligase alpha subunit (pheS), found in Rickettsia prowazekii (strain Madrid E).